Reading from the N-terminus, the 84-residue chain is MMNLILAFSGVIALYGGYLYLRLRQSQKQAATLQKEKEQLQTQKTVAETKVKNYQVKQKNEENLISRSRTSLLERMHNDGDLRD.

A helical membrane pass occupies residues 7 to 23; that stretch reads AFSGVIALYGGYLYLRL.

It is found in the membrane. This is an uncharacterized protein from Haemophilus influenzae (strain ATCC 51907 / DSM 11121 / KW20 / Rd).